We begin with the raw amino-acid sequence, 249 residues long: 4-hydroxy-tetrahydrodipicolinate reductase (249 aa).

NAD(+) is bound by residues 77–79 and 101–104; these read ATT and SYNT. The Proton donor/acceptor role is filled by H133. H134 is a binding site for (S)-2,3,4,5-tetrahydrodipicolinate. The active-site Proton donor is K137. 143-144 lines the (S)-2,3,4,5-tetrahydrodipicolinate pocket; sequence GT.

It belongs to the DapB family.

It is found in the cytoplasm. The catalysed reaction is (S)-2,3,4,5-tetrahydrodipicolinate + NAD(+) + H2O = (2S,4S)-4-hydroxy-2,3,4,5-tetrahydrodipicolinate + NADH + H(+). It carries out the reaction (S)-2,3,4,5-tetrahydrodipicolinate + NADP(+) + H2O = (2S,4S)-4-hydroxy-2,3,4,5-tetrahydrodipicolinate + NADPH + H(+). It participates in amino-acid biosynthesis; L-lysine biosynthesis via DAP pathway; (S)-tetrahydrodipicolinate from L-aspartate: step 4/4. Catalyzes the conversion of 4-hydroxy-tetrahydrodipicolinate (HTPA) to tetrahydrodipicolinate. The chain is 4-hydroxy-tetrahydrodipicolinate reductase from Exiguobacterium sp. (strain ATCC BAA-1283 / AT1b).